The primary structure comprises 211 residues: Redox-sensing transcriptional repressor Rex (211 aa).

Residues 18 to 57 constitute a DNA-binding region (H-T-H motif); that stretch reads LYYRFLENLHASGKQRVSSSELSEAVKVDSATIRRDFSYF. Position 92–97 (92–97) interacts with NAD(+); that stretch reads GVGNLG.

The protein belongs to the transcriptional regulatory Rex family. As to quaternary structure, homodimer.

It is found in the cytoplasm. Its function is as follows. Modulates transcription in response to changes in cellular NADH/NAD(+) redox state. In Halalkalibacterium halodurans (strain ATCC BAA-125 / DSM 18197 / FERM 7344 / JCM 9153 / C-125) (Bacillus halodurans), this protein is Redox-sensing transcriptional repressor Rex.